The primary structure comprises 304 residues: Chromo domain-containing protein cec-1 (304 aa).

In terms of domain architecture, Chromo spans 8–66 (YTVESILEHRKKKGKSEFYIKWLGYDHTHNSWEPKENIVDPTLIEAFFTREAARKAEIK). Residues 63-73 (AEIKAKKDKMA) show a composition bias toward basic and acidic residues. 2 disordered regions span residues 63–235 (AEIK…EIQL) and 248–304 (VEPA…AIIE). Residues 75 to 102 (GKKGASSKASASVSKASASTPARGAKAA) show a composition bias toward low complexity. Basic residues predominate over residues 106–116 (PPKKSPPKRQR). The span at 122–141 (IRPDSDTDEEHSSADKKSKA) shows a compositional bias: basic and acidic residues. 3 stretches are compositionally biased toward acidic residues: residues 142–152 (EDEEEVEDDEE), 163–204 (EEPE…DVQL), and 212–233 (EEEE…EEEI). The segment covering 248–292 (VEPAVATPEPSEPSSSEKAVVENGSSSAAAGNSASKPEVSAVEVV) has biased composition (low complexity). The segment covering 293 to 304 (TVEDDDDIAIIE) has biased composition (acidic residues).

It localises to the nucleus. It is found in the chromosome. This is Chromo domain-containing protein cec-1 (cec-1) from Caenorhabditis elegans.